The sequence spans 61 residues: Large ribosomal subunit protein uL30 (61 aa).

It belongs to the universal ribosomal protein uL30 family. Part of the 50S ribosomal subunit.

This is Large ribosomal subunit protein uL30 from Nitrosomonas eutropha (strain DSM 101675 / C91 / Nm57).